The chain runs to 217 residues: tRNA (guanine-N(7)-)-methyltransferase (217 aa).

Residues Glu-44, Glu-69, Asp-96, and Asp-118 each contribute to the S-adenosyl-L-methionine site. Asp-118 is a catalytic residue. Substrate contacts are provided by residues Lys-122, Asp-154, and 191–194; that span reads TEYE.

This sequence belongs to the class I-like SAM-binding methyltransferase superfamily. TrmB family.

The catalysed reaction is guanosine(46) in tRNA + S-adenosyl-L-methionine = N(7)-methylguanosine(46) in tRNA + S-adenosyl-L-homocysteine. It functions in the pathway tRNA modification; N(7)-methylguanine-tRNA biosynthesis. Its function is as follows. Catalyzes the formation of N(7)-methylguanine at position 46 (m7G46) in tRNA. This chain is tRNA (guanine-N(7)-)-methyltransferase, found in Bacillus cereus (strain B4264).